Reading from the N-terminus, the 852-residue chain is GPI ethanolamine phosphate transferase 2 (852 aa).

N-linked (GlcNAc...) asparagine glycosylation is found at Asn-191 and Asn-420. The next 3 membrane-spanning stretches (helical) occupy residues Leu-458 to Pro-478, Phe-486 to Ala-506, and Phe-516 to Phe-536. N-linked (GlcNAc...) asparagine glycosylation is present at Asn-576. A run of 6 helical transmembrane segments spans residues Leu-632–Tyr-652, Thr-676–Phe-696, Thr-714–Ile-734, Ser-750–Val-770, Ala-787–Cys-807, and Tyr-824–Ile-844.

This sequence belongs to the PIGG/PIGN/PIGO family. PIGG subfamily.

The protein resides in the endoplasmic reticulum membrane. The protein operates within glycolipid biosynthesis; glycosylphosphatidylinositol-anchor biosynthesis. Ethanolamine phosphate transferase involved in glycosylphosphatidylinositol-anchor biosynthesis. Transfers ethanolamine phosphate to the GPI second mannose. In Aspergillus oryzae (strain ATCC 42149 / RIB 40) (Yellow koji mold), this protein is GPI ethanolamine phosphate transferase 2 (las21).